The following is a 228-amino-acid chain: RNA chaperone ProQ (228 aa).

Residues 105–178 are disordered; sequence EAKARVQAQR…REEQHTPVSD (74 aa). Composition is skewed to basic and acidic residues over residues 117 to 136 and 146 to 173; these read QQAK…DAPR and RRKE…EEQH.

The protein belongs to the ProQ family.

It is found in the cytoplasm. In terms of biological role, RNA chaperone with significant RNA binding, RNA strand exchange and RNA duplexing activities. May regulate ProP activity through an RNA-based, post-transcriptional mechanism. In Citrobacter koseri (strain ATCC BAA-895 / CDC 4225-83 / SGSC4696), this protein is RNA chaperone ProQ.